The chain runs to 362 residues: Heat-inducible transcription repressor HrcA (362 aa).

This sequence belongs to the HrcA family.

Its function is as follows. Negative regulator of class I heat shock genes (grpE-dnaK-dnaJ and groELS operons). Prevents heat-shock induction of these operons. The chain is Heat-inducible transcription repressor HrcA from Rhizobium johnstonii (strain DSM 114642 / LMG 32736 / 3841) (Rhizobium leguminosarum bv. viciae).